The primary structure comprises 504 residues: CaM kinase-like vesicle-associated protein (504 aa).

One can recognise a Protein kinase domain in the interval 24–286 (YDLGQVVKTE…AEEAISHEWI (263 aa)). The tract at residues 378–504 (KSDDMASADR…AQESQRVETS (127 aa)) is disordered. Residue Ser-384 is modified to Phosphoserine. The span at 390–431 (TPATDGSATPATDGSVTPATDGSITPATDGSVTPATDRSATP) shows a compositional bias: polar residues. Phosphothreonine occurs at positions 438 and 462. The span at 445–470 (TVPAAQSSAAPAAKAAATPEPAVAQP) shows a compositional bias: low complexity.

This sequence belongs to the protein kinase superfamily. CAMK Ser/Thr protein kinase family. As to quaternary structure, interacts with calmodulin, in the presence of calcium. Ca(2+) serves as cofactor. Expressed in brain and weakly in eye. Not detected in liver, kidney, spleen, thymus, bladder, aorta, lung, intestine, esophagus, stomach, skeletal muscle, heart, diaphragm, uterus, tail skin, submaxillary gland, prostate, ear, epididymis, placenta, pancreas, ovary, testis, adrenal gland, parathyroid gland, thyroid gland, pineal gland, pituitary and sciatic nerve. In adult hippocampus, predominantly expressed in caudate nucleus, cortex, hypothalamus, olfactory bulb, and midbrain and faintly in pons, brainstem and spinal cord.

Its subcellular location is the cell membrane. The protein resides in the cytoplasmic vesicle membrane. Its function is as follows. Has no detectable kinase activity in vitro. The chain is CaM kinase-like vesicle-associated protein (Camkv) from Rattus norvegicus (Rat).